We begin with the raw amino-acid sequence, 584 residues long: 2-isopropylmalate synthase (584 aa).

The Pyruvate carboxyltransferase domain occupies 40–314; it reads PRWCAVDLRD…DPQIDFSDIE (275 aa). Mg(2+) contacts are provided by Asp-49, His-253, His-255, and Asn-289. Residues 456–584 form a regulatory domain region; that stretch reads SRDGSGSTWG…VRDAQEAAQD (129 aa).

The protein belongs to the alpha-IPM synthase/homocitrate synthase family. LeuA type 2 subfamily. As to quaternary structure, homodimer. The cofactor is Mg(2+).

The protein resides in the cytoplasm. It carries out the reaction 3-methyl-2-oxobutanoate + acetyl-CoA + H2O = (2S)-2-isopropylmalate + CoA + H(+). Its pathway is amino-acid biosynthesis; L-leucine biosynthesis; L-leucine from 3-methyl-2-oxobutanoate: step 1/4. Functionally, catalyzes the condensation of the acetyl group of acetyl-CoA with 3-methyl-2-oxobutanoate (2-ketoisovalerate) to form 3-carboxy-3-hydroxy-4-methylpentanoate (2-isopropylmalate). The chain is 2-isopropylmalate synthase from Kocuria rhizophila (strain ATCC 9341 / DSM 348 / NBRC 103217 / DC2201).